We begin with the raw amino-acid sequence, 174 residues long: uncharacterized protein (174 aa).

The protein belongs to the NAD(P)H dehydrogenase (quinone) family.

This is an uncharacterized protein from Bacillus subtilis (strain 168).